The primary structure comprises 294 residues: N-acetylmuramic acid 6-phosphate etherase (294 aa).

Residues 54–217 (VIQSFEEEGR…STASMIGVGK (164 aa)) form the SIS domain. The Proton donor role is filled by glutamate 82. The active site involves glutamate 113.

This sequence belongs to the GCKR-like family. MurNAc-6-P etherase subfamily. As to quaternary structure, homodimer.

The catalysed reaction is N-acetyl-D-muramate 6-phosphate + H2O = N-acetyl-D-glucosamine 6-phosphate + (R)-lactate. It functions in the pathway amino-sugar metabolism; N-acetylmuramate degradation. Functionally, specifically catalyzes the cleavage of the D-lactyl ether substituent of MurNAc 6-phosphate, producing GlcNAc 6-phosphate and D-lactate. This chain is N-acetylmuramic acid 6-phosphate etherase, found in Bacillus cereus (strain AH820).